A 105-amino-acid polypeptide reads, in one-letter code: Putative neurotoxin 10 (105 aa).

An N-terminal signal peptide occupies residues 1-21 (MTVSCSKVLLSLCLFLILLEA).

This sequence belongs to the scolopendra neurotoxin 10 family. Post-translationally, contains 3 disulfide bonds. As to expression, expressed by the venom gland.

Its subcellular location is the secreted. This chain is Putative neurotoxin 10, found in Scolopendra mutilans (Chinese red-headed centipede).